The sequence spans 492 residues: Glutamyl-tRNA(Gln) amidotransferase subunit A (492 aa).

Residues K84 and S159 each act as charge relay system in the active site. Residue S183 is the Acyl-ester intermediate of the active site.

It belongs to the amidase family. GatA subfamily. In terms of assembly, heterotrimer of A, B and C subunits.

The enzyme catalyses L-glutamyl-tRNA(Gln) + L-glutamine + ATP + H2O = L-glutaminyl-tRNA(Gln) + L-glutamate + ADP + phosphate + H(+). In terms of biological role, allows the formation of correctly charged Gln-tRNA(Gln) through the transamidation of misacylated Glu-tRNA(Gln) in organisms which lack glutaminyl-tRNA synthetase. The reaction takes place in the presence of glutamine and ATP through an activated gamma-phospho-Glu-tRNA(Gln). In Anaeromyxobacter sp. (strain K), this protein is Glutamyl-tRNA(Gln) amidotransferase subunit A.